Consider the following 333-residue polypeptide: Nucleoid-associated protein APL_0429 (333 aa).

Belongs to the YejK family.

It localises to the cytoplasm. The protein localises to the nucleoid. The sequence is that of Nucleoid-associated protein APL_0429 from Actinobacillus pleuropneumoniae serotype 5b (strain L20).